A 315-amino-acid polypeptide reads, in one-letter code: tRNA uridine(34) hydroxylase (315 aa).

Residues 122 to 223 form the Rhodanese domain; that stretch reads SDPDVLVIDT…YLEQIPQPES (102 aa). Cys-183 (cysteine persulfide intermediate) is an active-site residue.

It belongs to the TrhO family.

The enzyme catalyses uridine(34) in tRNA + AH2 + O2 = 5-hydroxyuridine(34) in tRNA + A + H2O. Its function is as follows. Catalyzes oxygen-dependent 5-hydroxyuridine (ho5U) modification at position 34 in tRNAs. The chain is tRNA uridine(34) hydroxylase from Caulobacter vibrioides (strain ATCC 19089 / CIP 103742 / CB 15) (Caulobacter crescentus).